Reading from the N-terminus, the 92-residue chain is Acylphosphatase (92 aa).

Residues 5–92 form the Acylphosphatase-like domain; the sequence is QVQLFVRGRV…GDFFDFRITD (88 aa). Catalysis depends on residues Arg20 and Asn38.

This sequence belongs to the acylphosphatase family.

It catalyses the reaction an acyl phosphate + H2O = a carboxylate + phosphate + H(+). The chain is Acylphosphatase (acyP) from Sorangium cellulosum (strain So ce56) (Polyangium cellulosum (strain So ce56)).